A 311-amino-acid polypeptide reads, in one-letter code: Telomere-binding protein I1 homolog (311 aa).

Belongs to the chordopoxvirinae I1 family.

The protein resides in the virion. Late DNA-binding protein which binds to the hairpin form of the viral telomeric sequence. Required for the production of mature virions (MV). This Fowlpox virus (strain NVSL) (FPV) protein is Telomere-binding protein I1 homolog.